A 216-amino-acid polypeptide reads, in one-letter code: Adenylate kinase (216 aa).

Residue 10-15 (GAGKGT) coordinates ATP. An NMP region spans residues 30–59 (STGDMFRAAMKAETELGLQAKSFIDKGALV). AMP-binding positions include T31, R36, 57 to 59 (ALV), 85 to 88 (GFPR), and Q92. Positions 126 to 163 (GRRICKECGATYHLEFNPPAKADVCDKCGGELYQRSDD) are LID. Residue R127 participates in ATP binding. Positions 130 and 133 each coordinate Zn(2+). 136–137 (TY) contacts ATP. Residues C150 and C153 each contribute to the Zn(2+) site. Residues R160 and R171 each contribute to the AMP site. Residue Q199 participates in ATP binding.

It belongs to the adenylate kinase family. In terms of assembly, monomer.

The protein resides in the cytoplasm. It catalyses the reaction AMP + ATP = 2 ADP. Its pathway is purine metabolism; AMP biosynthesis via salvage pathway; AMP from ADP: step 1/1. In terms of biological role, catalyzes the reversible transfer of the terminal phosphate group between ATP and AMP. Plays an important role in cellular energy homeostasis and in adenine nucleotide metabolism. This chain is Adenylate kinase, found in Bacillus cytotoxicus (strain DSM 22905 / CIP 110041 / 391-98 / NVH 391-98).